Consider the following 291-residue polypeptide: Ribosomal large subunit pseudouridine synthase B (291 aa).

The 73-residue stretch at 3-75 folds into the S4 RNA-binding domain; the sequence is EKLQKVLARA…ICRVLAYYKP (73 aa). D110 functions as the Nucleophile in the catalytic mechanism. The segment at 256–291 is disordered; that stretch reads VEKDRRRMKANQIRRAVKRHSQVSGGRRSGGRNNNG.

The protein belongs to the pseudouridine synthase RsuA family.

It carries out the reaction uridine(2605) in 23S rRNA = pseudouridine(2605) in 23S rRNA. In terms of biological role, responsible for synthesis of pseudouridine from uracil-2605 in 23S ribosomal RNA. This Escherichia coli (strain K12) protein is Ribosomal large subunit pseudouridine synthase B (rluB).